Consider the following 360-residue polypeptide: Phosphoserine aminotransferase (360 aa).

An L-glutamate-binding site is contributed by Arg-41. Pyridoxal 5'-phosphate-binding positions include 75–76, Trp-101, Thr-152, Asp-172, and Gln-195; that span reads GR. Lys-196 carries the N6-(pyridoxal phosphate)lysine modification. 237 to 238 provides a ligand contact to pyridoxal 5'-phosphate; sequence NT.

The protein belongs to the class-V pyridoxal-phosphate-dependent aminotransferase family. SerC subfamily. Homodimer. It depends on pyridoxal 5'-phosphate as a cofactor.

It is found in the cytoplasm. The catalysed reaction is O-phospho-L-serine + 2-oxoglutarate = 3-phosphooxypyruvate + L-glutamate. It catalyses the reaction 4-(phosphooxy)-L-threonine + 2-oxoglutarate = (R)-3-hydroxy-2-oxo-4-phosphooxybutanoate + L-glutamate. Its pathway is amino-acid biosynthesis; L-serine biosynthesis; L-serine from 3-phospho-D-glycerate: step 2/3. It functions in the pathway cofactor biosynthesis; pyridoxine 5'-phosphate biosynthesis; pyridoxine 5'-phosphate from D-erythrose 4-phosphate: step 3/5. Functionally, catalyzes the reversible conversion of 3-phosphohydroxypyruvate to phosphoserine and of 3-hydroxy-2-oxo-4-phosphonooxybutanoate to phosphohydroxythreonine. This Pseudoalteromonas translucida (strain TAC 125) protein is Phosphoserine aminotransferase.